The chain runs to 297 residues: MRPTLDSYTHLAGGKVRDLYTIDDEHLLLVASDRISAYDHVLSTPIPDKGRVLTAMSVFFFNVLGGTNHLAGEPDDDRIPEEVLGRALVVRSLDMVPVECVVRGFLTGSGLVDYNNTGAVCGVALPEGLVEASRLPDPIFTPASKAALGDHDENISFDQVVEKVGQKLAVQLREDTLDVYARASNFAADRGIILADTKLEFGLDSGGNLVLADEVLTPDSSRYWPLEGYEAGKVQPSFDKQFVRDWLTSPESGWDRSSDTTPPPLPQEIVDATRARYIEAYERISGLSFDDWVGPSA.

This sequence belongs to the SAICAR synthetase family.

The enzyme catalyses 5-amino-1-(5-phospho-D-ribosyl)imidazole-4-carboxylate + L-aspartate + ATP = (2S)-2-[5-amino-1-(5-phospho-beta-D-ribosyl)imidazole-4-carboxamido]succinate + ADP + phosphate + 2 H(+). Its pathway is purine metabolism; IMP biosynthesis via de novo pathway; 5-amino-1-(5-phospho-D-ribosyl)imidazole-4-carboxamide from 5-amino-1-(5-phospho-D-ribosyl)imidazole-4-carboxylate: step 1/2. The protein is Phosphoribosylaminoimidazole-succinocarboxamide synthase of Rhodococcus erythropolis (strain PR4 / NBRC 100887).